The chain runs to 353 residues: COMPASS component SPP1 (353 aa).

Residues 22–72 (DVYCICKRPDYGELMVGCDGCDDWFHFTCLHIPEQFKDLVFSFYCPYCQAG) form a PHD-type zinc finger. Zn(2+) contacts are provided by cysteine 25, cysteine 27, cysteine 39, cysteine 42, histidine 47, cysteine 50, cysteine 66, and cysteine 69. The tract at residues 83–124 (NGEGSLPKTLWKRKCRISDCYKPCLQDSKYCSEEHGREFVND) is non coventional C3H-type zinc finger. The residue at position 87 (serine 87) is a Phosphoserine. 4 residues coordinate Zn(2+): cysteine 97, cysteine 102, cysteine 113, and histidine 117. Basic and acidic residues predominate over residues 235 to 244 (VECGKEDSKG). The tract at residues 235-255 (VECGKEDSKGTKRKKKKNSSR) is disordered. Residues 245–255 (TKRKKKKNSSR) show a composition bias toward basic residues.

As to quaternary structure, component of the Set1C/COMPASS complex which consists of SET1(2), BRE2(2), SPP1(2), SDC1(1), SHG1(1), SWD1(1), SWD2(1), and SWD3(1).

It is found in the nucleus. Component of the Set1C/COMPASS complex that specifically mono-, di- and trimethylates histone H3 to form H3K4me1/2/3, which subsequently plays a role in telomere length maintenance and transcription elongation regulation. COMPASS recognizes ubiquitinated H2B on one face of the nucleosome which stimulates the methylation of H3 on the opposing face. SPP1/CPS40 can recognize methylated histone lysine residue H3K4me3 or unmethylated H3K4. Stimulates the RNA binding activity of SET1. The chain is COMPASS component SPP1 from Saccharomyces cerevisiae (strain ATCC 204508 / S288c) (Baker's yeast).